Consider the following 177-residue polypeptide: Bifunctional protein PyrR (177 aa).

A PRPP-binding motif is present at residues 98–110 (IILVDDVIYTGRT).

It belongs to the purine/pyrimidine phosphoribosyltransferase family. PyrR subfamily. Homodimer and homohexamer; in equilibrium.

The catalysed reaction is UMP + diphosphate = 5-phospho-alpha-D-ribose 1-diphosphate + uracil. Regulates transcriptional attenuation of the pyrimidine nucleotide (pyr) operon by binding in a uridine-dependent manner to specific sites on pyr mRNA. This disrupts an antiterminator hairpin in the RNA and favors formation of a downstream transcription terminator, leading to a reduced expression of downstream genes. Its function is as follows. Also displays a weak uracil phosphoribosyltransferase activity which is not physiologically significant. This chain is Bifunctional protein PyrR, found in Clostridium kluyveri (strain ATCC 8527 / DSM 555 / NBRC 12016 / NCIMB 10680 / K1).